The primary structure comprises 189 residues: Elongation factor P (189 aa).

It belongs to the elongation factor P family.

Its subcellular location is the cytoplasm. It functions in the pathway protein biosynthesis; polypeptide chain elongation. Involved in peptide bond synthesis. Stimulates efficient translation and peptide-bond synthesis on native or reconstituted 70S ribosomes in vitro. Probably functions indirectly by altering the affinity of the ribosome for aminoacyl-tRNA, thus increasing their reactivity as acceptors for peptidyl transferase. The protein is Elongation factor P of Rhizobium meliloti (strain 1021) (Ensifer meliloti).